The primary structure comprises 230 residues: Cytidylate kinase (230 aa).

ATP is bound at residue 12-20 (GPSGAGKGT).

This sequence belongs to the cytidylate kinase family. Type 1 subfamily.

It localises to the cytoplasm. It catalyses the reaction CMP + ATP = CDP + ADP. It carries out the reaction dCMP + ATP = dCDP + ADP. The sequence is that of Cytidylate kinase from Shewanella baltica (strain OS223).